A 288-amino-acid chain; its full sequence is Eukaryotic translation initiation factor 3 subunit F-2 (288 aa).

Residues 12 to 149 (VLLHPLVLFQ…TRIFCAVATG (138 aa)) form the MPN domain.

Belongs to the eIF-3 subunit F family. Component of the eukaryotic translation initiation factor 3 (eIF-3) complex. The eIF-3 complex interacts with pix.

It is found in the cytoplasm. In terms of biological role, component of the eukaryotic translation initiation factor 3 (eIF-3) complex, which is involved in protein synthesis of a specialized repertoire of mRNAs and, together with other initiation factors, stimulates binding of mRNA and methionyl-tRNAi to the 40S ribosome. The eIF-3 complex specifically targets and initiates translation of a subset of mRNAs involved in cell proliferation. This Drosophila pseudoobscura pseudoobscura (Fruit fly) protein is Eukaryotic translation initiation factor 3 subunit F-2.